The sequence spans 1378 residues: Roundabout homolog 2 (1378 aa).

The N-terminal stretch at 1–21 (MSLLMFTQLLLCGFLYVRVDG) is a signal peptide. The Extracellular portion of the chain corresponds to 22–859 (SRLRQEDFPP…EQITDVVKQP (838 aa)). 5 Ig-like C2-type domains span residues 31–127 (PRIV…ASLE), 133–220 (DDFR…AELT), 225–309 (PTFL…ATLT), 314–409 (PQFV…LEVT), and 418–504 (PIIL…AVLD). Residues Cys52 and Cys110 are joined by a disulfide bond. The N-linked (GlcNAc...) asparagine glycan is linked to Asn123. Cystine bridges form between Cys154–Cys203, Cys246–Cys293, and Cys335–Cys391. N-linked (GlcNAc...) asparagine glycosylation is present at Asn426. The cysteines at positions 439 and 488 are disulfide-linked. Fibronectin type-III domains lie at 524–618 (PPSK…TQDI), 637–735 (VLVR…TEEA), and 739–836 (PPQS…IGRR). Residues 603–625 (LSDPSPMSDPVRTQDISPPAQGV) are disordered. Residues Asn752, Asn782, Asn789, and Asn845 are each glycosylated (N-linked (GlcNAc...) asparagine). A helical membrane pass occupies residues 860-880 (AFIAGIGGACWVILMGFSIWL). Residues 881–1378 (YWRRKKRKGL…NSQGQFTGEL (498 aa)) lie on the Cytoplasmic side of the membrane. Disordered regions lie at residues 1032-1084 (GFGY…PLPG), 1124-1156 (EDDD…LTPS), and 1215-1348 (DVAD…KTEV). A compositionally biased stretch (low complexity) spans 1058–1067 (SSKPQKNNGS). Positions 1141-1155 (PAISFGQQSTATLTP) are enriched in polar residues. Position 1154 is a phosphothreonine (Thr1154). Ser1156 is modified (phosphoserine). The span at 1215-1228 (DVADDDADDEEEAL) shows a compositional bias: acidic residues. Residues 1240-1285 (TPGSSMDNLDSSVTGKAFTSSQRPRPTSPFSTDSNTSAALSQSQRP) are compositionally biased toward polar residues. Over residues 1319–1343 (SKPSFPSPGGHSSSGTASSKGSTGP) the composition is skewed to low complexity.

Belongs to the immunoglobulin superfamily. ROBO family. Interacts with SLIT2.

It localises to the membrane. Its function is as follows. Receptor for SLIT2, and probably SLIT1, which are thought to act as molecular guidance cue in cellular migration, including axonal navigation at the ventral midline of the neural tube and projection of axons to different regions during neuronal development. The sequence is that of Roundabout homolog 2 (ROBO2) from Homo sapiens (Human).